The following is a 168-amino-acid chain: G/U mismatch-specific DNA glycosylase (168 aa).

It belongs to the uracil-DNA glycosylase (UDG) superfamily. TDG/mug family. Binds DNA as a monomer.

The protein localises to the cytoplasm. The catalysed reaction is Specifically hydrolyzes mismatched double-stranded DNA and polynucleotides, releasing free uracil.. Excises ethenocytosine and uracil, which can arise by alkylation or deamination of cytosine, respectively, from the corresponding mispairs with guanine in ds-DNA. It is capable of hydrolyzing the carbon-nitrogen bond between the sugar-phosphate backbone of the DNA and the mispaired base. The complementary strand guanine functions in substrate recognition. Required for DNA damage lesion repair in stationary-phase cells. This chain is G/U mismatch-specific DNA glycosylase, found in Salmonella choleraesuis (strain SC-B67).